A 182-amino-acid chain; its full sequence is NADH-quinone oxidoreductase subunit I (182 aa).

2 4Fe-4S ferredoxin-type domains span residues 52–82 (LTRD…LQKA) and 92–121 (DFFR…LTPD). 8 residues coordinate [4Fe-4S] cluster: Cys-62, Cys-65, Cys-68, Cys-72, Cys-101, Cys-104, Cys-107, and Cys-111.

It belongs to the complex I 23 kDa subunit family. As to quaternary structure, NDH-1 is composed of 13 different subunits. Subunits NuoA, H, J, K, L, M, N constitute the membrane sector of the complex. [4Fe-4S] cluster is required as a cofactor.

It is found in the cell inner membrane. It carries out the reaction a quinone + NADH + 5 H(+)(in) = a quinol + NAD(+) + 4 H(+)(out). In terms of biological role, NDH-1 shuttles electrons from NADH, via FMN and iron-sulfur (Fe-S) centers, to quinones in the respiratory chain. The immediate electron acceptor for the enzyme in this species is believed to be ubiquinone. Couples the redox reaction to proton translocation (for every two electrons transferred, four hydrogen ions are translocated across the cytoplasmic membrane), and thus conserves the redox energy in a proton gradient. The protein is NADH-quinone oxidoreductase subunit I of Pseudomonas savastanoi pv. phaseolicola (strain 1448A / Race 6) (Pseudomonas syringae pv. phaseolicola (strain 1448A / Race 6)).